Here is a 549-residue protein sequence, read N- to C-terminus: Glucose-6-phosphate isomerase (549 aa).

E355 serves as the catalytic Proton donor. Residues H386 and K514 contribute to the active site.

Belongs to the GPI family.

The protein localises to the cytoplasm. It catalyses the reaction alpha-D-glucose 6-phosphate = beta-D-fructose 6-phosphate. Its pathway is carbohydrate biosynthesis; gluconeogenesis. It functions in the pathway carbohydrate degradation; glycolysis; D-glyceraldehyde 3-phosphate and glycerone phosphate from D-glucose: step 2/4. Its function is as follows. Catalyzes the reversible isomerization of glucose-6-phosphate to fructose-6-phosphate. In Pectobacterium carotovorum subsp. carotovorum (strain PC1), this protein is Glucose-6-phosphate isomerase.